A 357-amino-acid chain; its full sequence is 3-isopropylmalate dehydrogenase (357 aa).

Substrate-binding residues include Arg-97, Arg-107, Arg-135, and Asp-224. Asp-224, Asp-248, and Asp-252 together coordinate Mg(2+). 282–294 is a binding site for NAD(+); that stretch reads GSAPDIAGQDKAN.

This sequence belongs to the isocitrate and isopropylmalate dehydrogenases family. LeuB type 1 subfamily. As to quaternary structure, homodimer. The cofactor is Mg(2+). Requires Mn(2+) as cofactor.

Its subcellular location is the cytoplasm. The catalysed reaction is (2R,3S)-3-isopropylmalate + NAD(+) = 4-methyl-2-oxopentanoate + CO2 + NADH. Its pathway is amino-acid biosynthesis; L-leucine biosynthesis; L-leucine from 3-methyl-2-oxobutanoate: step 3/4. Functionally, catalyzes the oxidation of 3-carboxy-2-hydroxy-4-methylpentanoate (3-isopropylmalate) to 3-carboxy-4-methyl-2-oxopentanoate. The product decarboxylates to 4-methyl-2 oxopentanoate. This is 3-isopropylmalate dehydrogenase from Parasynechococcus marenigrum (strain WH8102).